The sequence spans 709 residues: Septu protein PtuA (709 aa).

In terms of biological role, component of antiviral defense system Septu type II, composed of PtuA and PtuB. Expression of Septu type II in B.subtilis (strain BEST7003) confers resistance to phages SBSphiC and SpBeta. May be an ATPase. This Bacillus mycoides (strain KBAB4) (Bacillus weihenstephanensis) protein is Septu protein PtuA.